We begin with the raw amino-acid sequence, 29 residues long: Dermaseptin-9TR (29 aa).

As to expression, expressed by the skin glands.

The protein resides in the secreted. In terms of biological role, has antimicrobial activity. In Phyllomedusa trinitatis (Trinidad leaf frog), this protein is Dermaseptin-9TR.